Here is a 218-residue protein sequence, read N- to C-terminus: Superoxide dismutase [Mn] 1 (218 aa).

Mn(2+) contacts are provided by His43, His98, Asp180, and His184.

It belongs to the iron/manganese superoxide dismutase family. In terms of assembly, homodimer. Mn(2+) serves as cofactor.

The catalysed reaction is 2 superoxide + 2 H(+) = H2O2 + O2. Functionally, destroys superoxide anion radicals which are normally produced within the cells and which are toxic to biological systems. The sequence is that of Superoxide dismutase [Mn] 1 (sodA1) from Bacillus cereus (strain ATCC 14579 / DSM 31 / CCUG 7414 / JCM 2152 / NBRC 15305 / NCIMB 9373 / NCTC 2599 / NRRL B-3711).